The following is a 561-amino-acid chain: Arf-GAP domain and FG repeat-containing protein 1 (561 aa).

The region spanning 11-135 (EKHLKMLRDM…WYVPPEQAKV (125 aa)) is the Arf-GAP domain. The C4-type zinc finger occupies 29–52 (CFDCDQRGPTYVNMTVGSFVCTSC). Phosphoserine is present on serine 167. The tract at residues 170 to 193 (ALHLNKGTPSQSPVVGRSQGQQQE) is disordered. Over residues 176–191 (GTPSQSPVVGRSQGQQ) the composition is skewed to polar residues. Threonine 177 bears the Phosphothreonine mark. Phosphoserine is present on residues serine 181 and serine 362. Serine 367 carries O-linked (GlcNAc) serine glycosylation. Positions 413–433 (SAQTQPASSGPAPFGATPSTN) are disordered.

As to quaternary structure, interacts with FCHO1. Interacts with EPS15R and EPS15. Post-translationally, O-glycosylated. Expressed in the testes (at protein level).

It is found in the nucleus. The protein resides in the cytoplasmic vesicle. Functionally, required for vesicle docking or fusion during acrosome biogenesis. May play a role in RNA trafficking or localization. The sequence is that of Arf-GAP domain and FG repeat-containing protein 1 (Agfg1) from Mus musculus (Mouse).